Here is a 347-residue protein sequence, read N- to C-terminus: S-adenosylmethionine:tRNA ribosyltransferase-isomerase (347 aa).

This sequence belongs to the QueA family. Monomer.

Its subcellular location is the cytoplasm. It catalyses the reaction 7-aminomethyl-7-carbaguanosine(34) in tRNA + S-adenosyl-L-methionine = epoxyqueuosine(34) in tRNA + adenine + L-methionine + 2 H(+). It participates in tRNA modification; tRNA-queuosine biosynthesis. Transfers and isomerizes the ribose moiety from AdoMet to the 7-aminomethyl group of 7-deazaguanine (preQ1-tRNA) to give epoxyqueuosine (oQ-tRNA). The sequence is that of S-adenosylmethionine:tRNA ribosyltransferase-isomerase from Bordetella pertussis (strain Tohama I / ATCC BAA-589 / NCTC 13251).